The following is a 135-amino-acid chain: Fluoride-specific ion channel FluC 2 (135 aa).

A run of 4 helical transmembrane segments spans residues 5–25 (VLAAVAAGGALGALARAGLLA), 36–56 (WGTVLVNVLGCALIGVLMETL), 68–88 (PFLGVGVLGGFTTFSAAITDA), and 100–120 (ALLAIAANLIGALLAVSAAAG). Positions 76 and 79 each coordinate Na(+).

It belongs to the fluoride channel Fluc/FEX (TC 1.A.43) family.

It localises to the cell membrane. It carries out the reaction fluoride(in) = fluoride(out). Na(+) is not transported, but it plays an essential structural role and its presence is essential for fluoride channel function. Fluoride-specific ion channel. Important for reducing fluoride concentration in the cell, thus reducing its toxicity. The polypeptide is Fluoride-specific ion channel FluC 2 (Thermobifida fusca (strain YX)).